A 339-amino-acid chain; its full sequence is Ketol-acid reductoisomerase (NADP(+)) (339 aa).

Residues 1–182 (MRVYYDRDAD…GGGRSGVIET (182 aa)) enclose the KARI N-terminal Rossmann domain. NADP(+)-binding positions include 24–27 (YGSQ), arginine 48, serine 51, threonine 53, and 83–86 (DELQ). Residue histidine 108 is part of the active site. Residue glycine 134 participates in NADP(+) binding. Residues 183-328 (TFKEECETDL…GKLRAMMPWI (146 aa)) form the KARI C-terminal knotted domain. Mg(2+)-binding residues include aspartate 191, glutamate 195, glutamate 227, and glutamate 231. Serine 252 contacts substrate.

Belongs to the ketol-acid reductoisomerase family. Requires Mg(2+) as cofactor.

The enzyme catalyses (2R)-2,3-dihydroxy-3-methylbutanoate + NADP(+) = (2S)-2-acetolactate + NADPH + H(+). It catalyses the reaction (2R,3R)-2,3-dihydroxy-3-methylpentanoate + NADP(+) = (S)-2-ethyl-2-hydroxy-3-oxobutanoate + NADPH + H(+). It functions in the pathway amino-acid biosynthesis; L-isoleucine biosynthesis; L-isoleucine from 2-oxobutanoate: step 2/4. Its pathway is amino-acid biosynthesis; L-valine biosynthesis; L-valine from pyruvate: step 2/4. Functionally, involved in the biosynthesis of branched-chain amino acids (BCAA). Catalyzes an alkyl-migration followed by a ketol-acid reduction of (S)-2-acetolactate (S2AL) to yield (R)-2,3-dihydroxy-isovalerate. In the isomerase reaction, S2AL is rearranged via a Mg-dependent methyl migration to produce 3-hydroxy-3-methyl-2-ketobutyrate (HMKB). In the reductase reaction, this 2-ketoacid undergoes a metal-dependent reduction by NADPH to yield (R)-2,3-dihydroxy-isovalerate. In Brucella abortus (strain S19), this protein is Ketol-acid reductoisomerase (NADP(+)).